We begin with the raw amino-acid sequence, 473 residues long: MATVAEQWVLVEMVQALYEAPAYHLILEGILILWIIRLVFSKTYKLQERSDLTAKEKEELIEEWQPEPLVPPVSRNHPALNYNIVSGPPTHNIVVNGKECVNFASFNFLGLLANPRVKAAAFASLKKYGVGTCGPRGFYGTFDVHLDLEERLAKFMKTEEAIIYSYGFSTIASAIPAYSKRGDIVFVDSAACFAIQKGLQASRSDIKLFKHNDVADLERLLKEQEIEDQKNPRKARVTRRFIVAEGLYMNTGTICPLPELVRLKYKYKARIFLEESLSFGVLGEHGRGVTEHYGISIDDIDLISANMENALASVGGFCCGRSFVVDHQRLSGQGYCFSASLPPLLAAAAIEALNIMEENPGIFAVLKKKCQTIHKSLQGVSGLKVVGESLCPALHLQLEESTGSRERDMKLLQEIVEQCMNKGIALTQARYLDKEEKCLPPPSIRVVVTVEQTDEELQRAAATIREAAQAVLL.

Over 1–15 (MATVAEQWVLVEMVQ) the chain is Lumenal. Positions 1–66 (MATVAEQWVL…KEELIEEWQP (66 aa)) are interaction with SPTLC2. The chain crosses the membrane as a helical span at residues 16–36 (ALYEAPAYHLILEGILILWII). Topologically, residues 37–473 (RLVFSKTYKL…IREAAQAVLL (437 aa)) are cytoplasmic. Tyr164 carries the post-translational modification Phosphotyrosine; by ABL.

The protein belongs to the class-II pyridoxal-phosphate-dependent aminotransferase family. As to quaternary structure, component of the serine palmitoyltransferase (SPT) complex, which is also composed of SPTLC2 or SPTLC3 and SPTSSA or SPTSSB. The heterodimer with SPTLC2 or SPTLC3 forms the catalytic core of the enzyme, while SPTSSA or SPTSSB subunits determine substrate specificity. SPT also interacts with ORMDL proteins, especially ORMDL3, which negatively regulate SPT activity in the presence of ceramides. Forms dimers of heterodimers with SPTLC2. Interacts with RTN4 (isoform B). Pyridoxal 5'-phosphate serves as cofactor. Phosphorylation at Tyr-164 inhibits activity and promotes cell survival. As to expression, expressed in astrocytes.

It localises to the endoplasmic reticulum membrane. The enzyme catalyses L-serine + hexadecanoyl-CoA + H(+) = 3-oxosphinganine + CO2 + CoA. It catalyses the reaction octadecanoyl-CoA + L-serine + H(+) = 3-oxoeicosasphinganine + CO2 + CoA. It carries out the reaction tetradecanoyl-CoA + L-serine + H(+) = 3-oxohexadecasphinganine + CO2 + CoA. The catalysed reaction is dodecanoyl-CoA + L-serine + H(+) = 3-oxotetradecasphinganine + CO2 + CoA. It participates in lipid metabolism; sphingolipid metabolism. With respect to regulation, SPT complex catalytic activity is negatively regulated by ORMDL proteins, including ORMDL3, in the presence of ceramides. This mechanism allows to maintain ceramide levels at sufficient concentrations for the production of complex sphingolipids, but which prevents the accumulation of ceramides to levels that trigger apoptosis. In terms of biological role, component of the serine palmitoyltransferase multisubunit enzyme (SPT) that catalyzes the initial and rate-limiting step in sphingolipid biosynthesis by condensing L-serine and activated acyl-CoA (most commonly palmitoyl-CoA) to form long-chain bases. The SPT complex is also composed of SPTLC2 or SPTLC3 and SPTSSA or SPTSSB. Within this complex, the heterodimer with SPTLC2 or SPTLC3 forms the catalytic core. The composition of the serine palmitoyltransferase (SPT) complex determines the substrate preference. The SPTLC1-SPTLC2-SPTSSA complex shows a strong preference for C16-CoA substrate, while the SPTLC1-SPTLC3-SPTSSA isozyme uses both C14-CoA and C16-CoA as substrates, with a slight preference for C14-CoA. The SPTLC1-SPTLC2-SPTSSB complex shows a strong preference for C18-CoA substrate, while the SPTLC1-SPTLC3-SPTSSB isozyme displays an ability to use a broader range of acyl-CoAs, without apparent preference. Required for adipocyte cell viability and metabolic homeostasis. This is Serine palmitoyltransferase 1 from Rattus norvegicus (Rat).